The following is a 308-amino-acid chain: Mitochondrial import receptor subunit TOM40B (308 aa).

The interval 1 to 29 is disordered; the sequence is MGNTLGLAPMGTLPRRSPRREEPLPNPGS. Residues 281-308 form a required for mitochondrial targeting region; the sequence is PLPVTLALGAFLNHWRNRFHCGFSITVG.

This sequence belongs to the Tom40 family. As to quaternary structure, forms part of the preprotein translocase of the outer mitochondrial membrane (TOM complex) containing TOMM22, TOMM40, TOMM40L and TOMM70. Interacts with mitochondrial targeting sequences.

It localises to the mitochondrion outer membrane. Functionally, potential channel-forming protein implicated in import of protein precursors into mitochondria. This Homo sapiens (Human) protein is Mitochondrial import receptor subunit TOM40B (TOMM40L).